The chain runs to 923 residues: Smoothelin (923 aa).

Alanine 2 is modified (N-acetylalanine). Residues 24 to 89 (LAERRRIRSA…ARLAGRLESM (66 aa)) are a coiled coil. The disordered stretch occupies residues 134–456 (SRLPSSGPRE…GTGEPGGSMK (323 aa)). 2 stretches are compositionally biased toward low complexity: residues 164-179 (QEQQTEVLEPTPTPED) and 192-205 (RAPPGGRPSSPASP). Pro residues predominate over residues 237–252 (LPHPSEAPSPEPPMSP). 2 stretches are compositionally biased toward polar residues: residues 272-285 (PSDTLDSIRGFSNT) and 293-314 (TKSCQRSLSVLSPRQPTPNREP). Phosphoserine is present on residues serine 299, serine 301, serine 304, and serine 340. A phosphothreonine mark is found at threonine 359 and threonine 372. Low complexity predominate over residues 366–389 (PSLISTTPASSSSSNSSSPSPSDT). Phosphoserine occurs at positions 501, 521, and 574. Disordered regions lie at residues 542–578 (KMEPDPAEPPSTTVEAANGAEQARVDKGPEGRSPLSA) and 615–772 (QRKR…ARKA). The stretch at 601–628 (EERKLIRAALRELRQRKRDQRDKERERR) forms a coiled coil. Residues 615-638 (QRKRDQRDKERERRLREARARPGE) show a composition bias toward basic and acidic residues. Serine 641 is subject to Phosphoserine. Positions 674–687 (NDGTQTARTTTVES) are enriched in polar residues. The segment covering 697 to 721 (SSSSSTTTTTVQTKSFSSSSSSSSS) has biased composition (low complexity). At serine 735 the chain carries Phosphoserine. Residues 744-756 (LERRQAEKKKELM) show a composition bias toward basic and acidic residues. Serine 798 carries the post-translational modification Phosphoserine. Residues 805–912 (NSIKQMLLDW…YVQSLYNHLR (108 aa)) form the Calponin-homology (CH) domain.

The protein belongs to the smoothelin family.

The protein resides in the cytoplasm. It localises to the cytoskeleton. In terms of biological role, structural protein of the cytoskeleton. In Mus musculus (Mouse), this protein is Smoothelin (Smtn).